Here is a 464-residue protein sequence, read N- to C-terminus: Glycine receptor subunit alpha-3 (464 aa).

Residues 1 to 33 (MAHVRHFRTLVSGFYFWEAALLLSLVATKETNS) form the signal peptide. Over 34–255 (ARSRSAPMSP…RFHLERQMGY (222 aa)) the chain is Extracellular. Asparagine 71 carries an N-linked (GlcNAc...) asparagine glycan. Cysteines 171 and 185 form a disulfide. Residues glutamate 225 and aspartate 227 each contribute to the Zn(2+) site. Cysteine 231 and cysteine 242 form a disulfide bridge. 235–240 (YNTGKF) provides a ligand contact to strychnine. Histidine 248 serves as a coordination point for Zn(2+). The helical transmembrane segment at 256–277 (YLIQMYIPSLLIVILSWVSFWI) threads the bilayer. Over 278–282 (NMDAA) the chain is Cytoplasmic. A helical transmembrane segment spans residues 283–303 (PARVALGITTVLTMTTQSSGS). Residues 304–314 (RASLPKVSYVK) lie on the Extracellular side of the membrane. A helical transmembrane segment spans residues 315 to 335 (AIDIWMAVCLLFVFSALLEYA). At 336-430 (AVNFVSRQHK…FIDRAKKIDT (95 aa)) the chain is on the cytoplasmic side. A Phosphoserine modification is found at serine 370. Serine 379 bears the Phosphoserine; by PKA mark. The chain crosses the membrane as a helical span at residues 431 to 451 (ISRACFPLAFLIFNIFYWVIY). Topologically, residues 452 to 464 (KILRHEDIHQQQD) are extracellular.

This sequence belongs to the ligand-gated ion channel (TC 1.A.9) family. Glycine receptor (TC 1.A.9.3) subfamily. GLRA3 sub-subfamily. In terms of assembly, homopentamer (in vitro). Heteropentamer composed of GLRA3 and GLRB. Both homopentamers and heteropentamers form functional ion channels, but their characteristics are subtly different. Phosphorylated by PKA; this causes down-regulation of channel activity. Dephosphorylated in response to activation of HTR1A signaling; this increases channel activity. As to expression, detected in brainstem, also in neurons that control rhythmic breathing. Detected in superficial laminae of the dorsal horn of the thoracic spinal cord. Detected in dentate gyrus in hippocampus, especially in stratum granulare. Detected in the inner plexiform layer in the retina (at protein level). Detected in midbrain, thalamus, brain cortex, hippocampus, and at lower levels in cerebellum.

It localises to the postsynaptic cell membrane. Its subcellular location is the synapse. It is found in the perikaryon. The protein resides in the cell projection. The protein localises to the dendrite. It localises to the cell membrane. The enzyme catalyses chloride(in) = chloride(out). With respect to regulation, inhibited by prostaglandin E2, probably via PKA-mediated phosphorylation at Ser-379. Its function is as follows. Glycine receptors are ligand-gated chloride channels. Channel opening is triggered by extracellular glycine. Channel characteristics depend on the subunit composition; heteropentameric channels display faster channel closure. Plays an important role in the down-regulation of neuronal excitability. Contributes to the generation of inhibitory postsynaptic currents. Contributes to increased pain perception in response to increased prostaglandin E2 levels. Plays a role in the regulation of breathing rhythm, especially of the duration of the postinspiratory phase. Plays a role in cellular responses to ethanol. This chain is Glycine receptor subunit alpha-3 (Glra3), found in Mus musculus (Mouse).